A 190-amino-acid polypeptide reads, in one-letter code: HTH-type transcriptional repressor CutR (190 aa).

The region spanning 3-58 (PINRQQHILKWLKEEGSLRISDISARFGVSEMTVYRDVNQLVQSNQVIKTAGGITL) is the HTH deoR-type domain. The H-T-H motif DNA-binding region spans 20–39 (LRISDISARFGVSEMTVYRD).

Its subcellular location is the cytoplasm. May act as a negative transcriptional regulator of cutJ/ycnJ in the presence of copper. May use copper as a corepressor. The chain is HTH-type transcriptional repressor CutR from Bacillus subtilis (strain 168).